The primary structure comprises 2397 residues: Cell wall alpha-1,3-glucan synthase mok11 (2397 aa).

Residues 1683 to 1705 form a disordered region; the sequence is SNQQSFDFKSSESDSFPQKSPSV. The segment covering 1687–1698 has biased composition (low complexity); it reads SFDFKSSESDSF.

This sequence belongs to the glycosyltransferase group 1 family.

It catalyses the reaction [(1-&gt;3)-alpha-D-glucosyl](n) + UDP-alpha-D-glucose = [(1-&gt;3)-alpha-D-glucosyl](n+1) + UDP + H(+). This chain is Cell wall alpha-1,3-glucan synthase mok11 (mok11), found in Schizosaccharomyces pombe (strain 972 / ATCC 24843) (Fission yeast).